The following is a 435-amino-acid chain: Cyclin-dependent kinase 15 (435 aa).

In terms of domain architecture, Protein kinase spans 103–387 (YLNLEKLGEG…AQEALVHDYF (285 aa)). ATP is bound by residues 109 to 117 (LGEGSYATV) and K132. Catalysis depends on D224, which acts as the Proton acceptor.

This sequence belongs to the protein kinase superfamily. CMGC Ser/Thr protein kinase family. CDC2/CDKX subfamily. Mg(2+) serves as cofactor.

The enzyme catalyses L-seryl-[protein] + ATP = O-phospho-L-seryl-[protein] + ADP + H(+). It catalyses the reaction L-threonyl-[protein] + ATP = O-phospho-L-threonyl-[protein] + ADP + H(+). Serine/threonine-protein kinase that acts like an antiapoptotic protein that counters TRAIL/TNFSF10-induced apoptosis by inducing phosphorylation of BIRC5 at 'Thr-34'. The polypeptide is Cyclin-dependent kinase 15 (CDK15) (Homo sapiens (Human)).